The sequence spans 398 residues: tRNA N6-adenosine threonylcarbamoyltransferase (398 aa).

Residues His162, His166, and Tyr183 each contribute to the a divalent metal cation site. Substrate contacts are provided by residues Tyr183–Gly187, Asp215, Gly230, Glu234, and Asn329. Asp357 contributes to the a divalent metal cation binding site.

It belongs to the KAE1 / TsaD family. In terms of assembly, component of the EKC/KEOPS complex composed of at least BUD32, CGI121, GON7, KAE1 and PCC1; the whole complex dimerizes. A divalent metal cation serves as cofactor.

It is found in the cytoplasm. The protein resides in the nucleus. The enzyme catalyses L-threonylcarbamoyladenylate + adenosine(37) in tRNA = N(6)-L-threonylcarbamoyladenosine(37) in tRNA + AMP + H(+). Component of the EKC/KEOPS complex that is required for the formation of a threonylcarbamoyl group on adenosine at position 37 (t(6)A37) in tRNAs that read codons beginning with adenine. The complex is probably involved in the transfer of the threonylcarbamoyl moiety of threonylcarbamoyl-AMP (TC-AMP) to the N6 group of A37. KAE1 likely plays a direct catalytic role in this reaction, but requires other protein(s) of the complex to fulfill this activity. The EKC/KEOPS complex also promotes both telomere uncapping and telomere elongation. The complex is required for efficient recruitment of transcriptional coactivators. In Cryptococcus neoformans var. neoformans serotype D (strain B-3501A) (Filobasidiella neoformans), this protein is tRNA N6-adenosine threonylcarbamoyltransferase.